The primary structure comprises 459 residues: Ammonium transporter Rh type B (459 aa).

Residues 1 to 10 (MAESTNLRLR) lie on the Cytoplasmic side of the membrane. A helical transmembrane segment spans residues 11 to 31 (LPLICIILEVILIILFGVLVE). At 32–58 (YNDDTDAKKWNKNNSTDPATNEFYYRY) the chain is on the extracellular side. N-linked (GlcNAc...) asparagine glycosylation occurs at N45. The helical transmembrane segment at 59-79 (PSFQDVHVMIFVGFGFLMTFL) threads the bilayer. The Cytoplasmic segment spans residues 80–87 (QRYGFSSM). A helical membrane pass occupies residues 88–108 (GFNFLIAAFSLQWATLMQGFF). Residues 109 to 121 (HGMHHGKIHVGVT) lie on the Extracellular side of the membrane. The helical transmembrane segment at 122–142 (SMINADFCTGAVLISFGAVLG) threads the bilayer. Residues 143–149 (KTSPVQL) lie on the Cytoplasmic side of the membrane. A helical transmembrane segment spans residues 150-170 (LVMAILEVTLFAVNEYILLSI). Over 171-176 (LGANDA) the chain is Extracellular. The chain crosses the membrane as a helical span at residues 177–197 (GGSMTIHTFGAYFGLMVTRIL). At 198–216 (HRPNLDKSKHKNSSVYHSD) the chain is on the cytoplasmic side. Residues 217-237 (LFAMIGTIFLWMFWPSFNSAI) traverse the membrane as a helical segment. Residues 238-248 (TQYGDPQHRTA) lie on the Extracellular side of the membrane. Residues 249 to 269 (ANTYYSLAACTLATFGFSSLV) form a helical membrane-spanning segment. Residues 270–274 (NPEGK) are Cytoplasmic-facing. A helical transmembrane segment spans residues 275-295 (LDMVHIQNAALAGGVAVGTAG). E296 is a topological domain (extracellular). The helical transmembrane segment at 297 to 317 (MMLTPFGSMIVGFLAGTISVL) threads the bilayer. Residues 318–340 (GYKYLTPFMESKLKIQDTCGIHN) are Cytoplasmic-facing. The chain crosses the membrane as a helical span at residues 341 to 361 (LHGMPGILGAIVGAVTAALAS). The Extracellular segment spans residues 362 to 392 (RDVYGNGLDKVFLEAADNSQWSAQTKGGFQA). A helical membrane pass occupies residues 393-413 (ISLAVTLGIALIGGLITGFLL). At 414–459 (KLPIYGTPPDTQCFEDAVYWEVPGEEEDHHELNEVSTQNEVEKLNS) the chain is on the cytoplasmic side. A disordered region spans residues 440–459 (EDHHELNEVSTQNEVEKLNS).

This sequence belongs to the ammonium transporter (TC 2.A.49) family. Rh subfamily.

The protein localises to the basolateral cell membrane. It is found in the cytoplasmic vesicle membrane. Its function is as follows. Functions as an ammonia transporter. May play a role in the elimination of ammonia in the gill. The chain is Ammonium transporter Rh type B (rhbg) from Danio rerio (Zebrafish).